A 467-amino-acid chain; its full sequence is Solute carrier family 52, riboflavin transporter, member 3 (467 aa).

Residues 1–2 (MA) lie on the Cytoplasmic side of the membrane. A helical membrane pass occupies residues 3–23 (FLIHLLVCTFGMGSWVAINGL). Topologically, residues 24-43 (WVELPLLVTELPEGWYLPSY) are extracellular. Residues 44–64 (LTVIIQLANVGPLLVTLLHHF) form a helical membrane-spanning segment. The Cytoplasmic portion of the chain corresponds to 65–71 (RPGCLSE). The chain crosses the membrane as a helical span at residues 72–92 (VAVVFTVLGVGTIACTLFAFL). The Extracellular segment spans residues 93–105 (WNVTSWVLGSRHS). N-linked (GlcNAc...) asparagine glycosylation occurs at Asn-94. Residues 106–126 (IAFLVLTFFLALVDCTSSVTF) traverse the membrane as a helical segment. Residues 127-137 (LPFMSRLPTYY) are Cytoplasmic-facing. The helical transmembrane segment at 138–158 (LTTFFVGEGLSGLLPALVALA) threads the bilayer. Topologically, residues 159–220 (QGSGLTTCVN…SRYLPANFSP (62 aa)) are extracellular. An N-linked (GlcNAc...) asparagine glycan is attached at Asn-168. The helical transmembrane segment at 221–241 (LVFFLLLSFMMACCFISFFFL) threads the bilayer. Topologically, residues 242–294 (QRQPKRWEASIEDLLTSQVTLNSIRPQEGKDLGPPEESGKAQDPPEEKTAPQH) are cytoplasmic. The residue at position 251 (Ser-251) is a Phosphoserine. The disordered stretch occupies residues 266–288 (RPQEGKDLGPPEESGKAQDPPEE). Residues 268–288 (QEGKDLGPPEESGKAQDPPEE) are compositionally biased toward basic and acidic residues. A helical transmembrane segment spans residues 295–315 (LAHLTFIYVLVAFVNALTNGV). The Extracellular segment spans residues 316 to 333 (LPSVQTYSCLSYGPVAYH). Residues 334 to 354 (LSATLSSMASPLTCFLSIFLP) traverse the membrane as a helical segment. At 355-359 (NRSLP) the chain is on the cytoplasmic side. The chain crosses the membrane as a helical span at residues 360–380 (FLGVLAVLGTSFGAYNMAMAV). At 381-394 (MSPCPFMQGHWGGE) the chain is on the extracellular side. A helical membrane pass occupies residues 395-415 (VLIVVSWVLFTGCLSYVKVML). At 416 to 425 (GVILRDHSRS) the chain is on the cytoplasmic side. A helical transmembrane segment spans residues 426 to 446 (ALLWCGAAVQLGSLLGAVVMF). Over 447-467 (PLVNVLRLFSSADFCSLQCSA) the chain is Extracellular.

Belongs to the riboflavin transporter family.

It localises to the cell membrane. It catalyses the reaction riboflavin(in) = riboflavin(out). Functionally, plasma membrane transporter mediating the uptake by cells of the water soluble vitamin B2/riboflavin that plays a key role in biochemical oxidation-reduction reactions of the carbohydrate, lipid, and amino acid metabolism. The polypeptide is Solute carrier family 52, riboflavin transporter, member 3 (SLC52A3) (Bos taurus (Bovine)).